Here is a 212-residue protein sequence, read N- to C-terminus: External core antigen (212 aa).

Positions methionine 1–alanine 19 are cleaved as a signal peptide. The tract at residues glycine 25–leucine 27 is HBEAG. Positions asparagine 165 to cysteine 212 are disordered. The span at valine 178–serine 205 shows a compositional bias: basic residues. Residues serine 184–proline 190 form a 1; half-length repeat. The 3 X 8 AA repeats of S-P-R-R-R-R-S-Q stretch occupies residues serine 184–glutamine 206. Positions serine 184–cysteine 212 are excised as a propeptide. 2 consecutive repeat copies span residues serine 191 to glutamine 198 and serine 199 to glutamine 206.

The protein belongs to the orthohepadnavirus precore antigen family. As to quaternary structure, homodimerizes. In terms of processing, phosphorylated. Post-translationally, cleaved by host furin.

It localises to the secreted. The protein localises to the host nucleus. In terms of biological role, may regulate immune response to the intracellular capsid in acting as a T-cell tolerogen, by having an immunoregulatory effect which prevents destruction of infected cells by cytotoxic T-cells. This immune regulation may predispose to chronicity during perinatal infections and prevent severe liver injury during adult infections. The sequence is that of External core antigen from Hepatitis B virus genotype B2 (isolate Indonesia/pIDW420/1988) (HBV-B).